The sequence spans 601 residues: MVSNQDNVQRNDVQKYPITRFVKRKSNVVLKKNKGAMKSNSNSRSRGNKKLKESQFSSRDNFRTTQTQASSSSEPSDNTNRLVPVVIIDNNTPKKEESNAEKLKLDKDSSSVNYENQISKPLITFSDIHETVNVPFLCLDKHDSKNEVAINSHEDSPVCLEDITGSLSSTYGNDSLGESNLEELPTSDKIKGENMGSRKKRKGFVIDSEDSDTGIPREENVTITRKTKLSSNILYSDSDTERQSDSGSKNVARQFSRIKRKRKVLSSSSEDDESSSPEDLLKPIIRSTEEMENLNELEQEVQDLDPIDEGFEEKVPRFRNPSKKAFYEKLHSLRNRSYSKLESLTSEKSDTLITKSELANESEEDDFIVDDEDTEVMMNARSLLPAEFSMTSHQGLKAHFRNFMMFIVQQAIDPIDASDISDHYLFSRRTIRKQLYSSVDSNIISSIWQSEFIKLIKTVPNMKSAKIDATYGCDACNIHTRMSTQIVYFKGMPYNEHNYKELDSFEPITKEAWMLGNSCFNRARIAHSIYHWEYKVSRHIQVELKFREASNTSEQGKNIVESIYEDLKDSNFFETTWVELCNLLKLASSSFESNFHSRSSM.

The span at 24–35 (RKSNVVLKKNKG) shows a compositional bias: basic residues. 2 disordered regions span residues 24-106 (RKSN…LKLD) and 171-219 (YGND…PREE). Residues 54-81 (SQFSSRDNFRTTQTQASSSSEPSDNTNR) are compositionally biased toward polar residues. Basic and acidic residues predominate over residues 92-106 (TPKKEESNAEKLKLD). 2 positions are modified to phosphoserine: Ser236 and Ser238. Residues 260–283 (RKRKVLSSSSEDDESSSPEDLLKP) are disordered.

Its subcellular location is the nucleus. This is an uncharacterized protein from Schizosaccharomyces pombe (strain 972 / ATCC 24843) (Fission yeast).